A 166-amino-acid chain; its full sequence is Large ribosomal subunit protein uL10 (166 aa).

It belongs to the universal ribosomal protein uL10 family. In terms of assembly, part of the ribosomal stalk of the 50S ribosomal subunit. The N-terminus interacts with L11 and the large rRNA to form the base of the stalk. The C-terminus forms an elongated spine to which L12 dimers bind in a sequential fashion forming a multimeric L10(L12)X complex.

Its function is as follows. Forms part of the ribosomal stalk, playing a central role in the interaction of the ribosome with GTP-bound translation factors. The polypeptide is Large ribosomal subunit protein uL10 (Ureaplasma urealyticum serovar 10 (strain ATCC 33699 / Western)).